Reading from the N-terminus, the 552-residue chain is Non-structural protein NS1 (552 aa).

It belongs to the orbivirus non-structural protein NS1 family.

This is Non-structural protein NS1 (Segment-5) from Epizootic hemorrhagic disease virus 2 (strain Alberta) (EHDV-2).